A 196-amino-acid polypeptide reads, in one-letter code: MEGNNSSSKSTTNPALDPDLDSPDQPGLEFAQFAAGCFWGVELAFQRVGGVVKTEVGYSQGNVHDPNYKLICSGTTEHAEAIRIQFDPNVCPYSNLLSLFWSRHDPTTLNRQGNDVGKQYRSGIYYYNDAQAQLARESLEAKQKEFMDKKIVTEILPAKRFYRAEEYHQQYLEKGGGRGCKQSAAKGCNDPIRCYG.

The span at 1 to 14 shows a compositional bias: polar residues; sequence MEGNNSSSKSTTNP. Residues 1–23 form a disordered region; that stretch reads MEGNNSSSKSTTNPALDPDLDSP.

Belongs to the MsrA Met sulfoxide reductase family.

It catalyses the reaction L-methionyl-[protein] + [thioredoxin]-disulfide + H2O = L-methionyl-(S)-S-oxide-[protein] + [thioredoxin]-dithiol. The enzyme catalyses [thioredoxin]-disulfide + L-methionine + H2O = L-methionine (S)-S-oxide + [thioredoxin]-dithiol. In terms of biological role, has an important function as a repair enzyme for proteins that have been inactivated by oxidation. Catalyzes the reversible oxidation-reduction of methionine sulfoxide in proteins to methionine. The protein is Peptide methionine sulfoxide reductase (E4) of Solanum lycopersicum (Tomato).